The sequence spans 119 residues: Large ribosomal subunit protein uL18 (119 aa).

Residues 1-23 (MSQVDKAARRQKIKDRSRVSVQG) form a disordered region.

This sequence belongs to the universal ribosomal protein uL18 family. In terms of assembly, part of the 50S ribosomal subunit; part of the 5S rRNA/L5/L18/L25 subcomplex. Contacts the 5S and 23S rRNAs.

This is one of the proteins that bind and probably mediate the attachment of the 5S RNA into the large ribosomal subunit, where it forms part of the central protuberance. The polypeptide is Large ribosomal subunit protein uL18 (Chlorobium chlorochromatii (strain CaD3)).